Reading from the N-terminus, the 566-residue chain is MSPSPVNTSTEPASVAAVSNGNATASSTQVPENNQSDSFAPPSNNSQQNQQSSTIAPNGGAGSVANANPADQSDGVTPSFVGSLKLDYEPNPFEHSFGSTASVGQGNPSLNRNPSLSNIPSGVPPAFARTLLPPVSSIASPDILSGAPGIASPLGYPAWSAFTRGTMHNPLSPAIYDATLRPDYLNNPSDASAAARFSSGTGFTPGVNEPFRSLLTPTGAGFPAPSPGTANLLGFHTFDSQFPDQYRFTPRDGKPPVVNGTNGDQSDYFGANAAVHGLCLLSQVPDQQQKLQQPISSENDQAASTTANNLLKQTQQQTFPDSIRPSFTQNTNPQAVTGTMNPQASRTQQQPMYFMGSQQFNGMPSVYGDTVNPADPSLTLRQTTDFSGQNAENGSTNLPQKTSNSDMPTANSMPVKLENGTDYSTSQEPSSNANNQSSPTSSINGKASSESANGTSYSKGSSRRNSKNETDEEKRKSFLERNRQAALKCRQRKKQWLSNLQAKVEFYGNENEILSAQVSALREEIVSLKTLLIAHKDCPVAKSNSAAVATSVIGSGDLAQRINLGY.

Polar residues predominate over residues 1–42 (MSPSPVNTSTEPASVAAVSNGNATASSTQVPENNQSDSFAPP). 4 disordered regions span residues 1–83 (MSPS…FVGS), 96–117 (SFGS…PSLS), 315–345 (QQQT…PQAS), and 357–479 (SQQF…KSFL). The segment covering 43-53 (SNNSQQNQQSS) has biased composition (low complexity). Polar residues-rich tracts occupy residues 65-76 (ANANPADQSDGV) and 97-106 (FGSTASVGQG). Residues 107 to 117 (NPSLNRNPSLS) show a composition bias toward low complexity. Polar residues-rich tracts occupy residues 379 to 412 (TLRQ…TANS) and 421 to 460 (TDYS…YSKG). Over residues 466–479 (SKNETDEEKRKSFL) the composition is skewed to basic and acidic residues. A bZIP domain is found at 472 to 535 (EEKRKSFLER…VSLKTLLIAH (64 aa)). Residues 474 to 503 (KRKSFLERNRQAALKCRQRKKQWLSNLQAK) form a basic motif region. Positions 514-528 (LSAQVSALREEIVSL) are leucine-zipper.

This sequence belongs to the bZIP family. Heterodimer of pcr1/mts2 and atf1/mts1. Post-translationally, phosphorylated by sty1/spc1.

The protein resides in the nucleus. Its function is as follows. Transcription factor required for sexual development and entry into stationary phase. Binds and activates CRE sites (cAMP-response elements, also known as M26 meiotic recombination hotspots). This chain is Transcription factor atf1 (atf1), found in Schizosaccharomyces pombe (strain 972 / ATCC 24843) (Fission yeast).